The sequence spans 324 residues: Ribose-phosphate pyrophosphokinase (324 aa).

ATP-binding positions include 45-47 and 104-105; these read NGE and RQ. Positions 138 and 178 each coordinate Mg(2+). The active site involves lysine 201. D-ribose 5-phosphate contacts are provided by residues arginine 203, aspartate 229, and 233–237; that span reads DTGGT.

The protein belongs to the ribose-phosphate pyrophosphokinase family. Class I subfamily. In terms of assembly, homohexamer. Mg(2+) serves as cofactor.

It is found in the cytoplasm. It catalyses the reaction D-ribose 5-phosphate + ATP = 5-phospho-alpha-D-ribose 1-diphosphate + AMP + H(+). It functions in the pathway metabolic intermediate biosynthesis; 5-phospho-alpha-D-ribose 1-diphosphate biosynthesis; 5-phospho-alpha-D-ribose 1-diphosphate from D-ribose 5-phosphate (route I): step 1/1. Functionally, involved in the biosynthesis of the central metabolite phospho-alpha-D-ribosyl-1-pyrophosphate (PRPP) via the transfer of pyrophosphoryl group from ATP to 1-hydroxyl of ribose-5-phosphate (Rib-5-P). The chain is Ribose-phosphate pyrophosphokinase from Streptomyces coelicolor (strain ATCC BAA-471 / A3(2) / M145).